Reading from the N-terminus, the 259-residue chain is Phosphate import ATP-binding protein PstB (259 aa).

One can recognise an ABC transporter domain in the interval 11–254; it reads AEARNLNFYY…PQDKRTEDYI (244 aa). 43 to 50 contributes to the ATP binding site; sequence GPSGCGKS.

The protein belongs to the ABC transporter superfamily. Phosphate importer (TC 3.A.1.7) family. The complex is composed of two ATP-binding proteins (PstB), two transmembrane proteins (PstC and PstA) and a solute-binding protein (PstS).

It is found in the cell inner membrane. The catalysed reaction is phosphate(out) + ATP + H2O = ADP + 2 phosphate(in) + H(+). Its function is as follows. Part of the ABC transporter complex PstSACB involved in phosphate import. Responsible for energy coupling to the transport system. The sequence is that of Phosphate import ATP-binding protein PstB from Dechloromonas aromatica (strain RCB).